The chain runs to 280 residues: Bicarbonate transport system permease protein CmpB (280 aa).

7 helical membrane-spanning segments follow: residues 32–52 (PIFG…AGLI), 99–119 (YSLA…QPLL), 126–146 (IFQF…LVAL), 153–173 (AIFV…TEGV), 198–218 (ILIP…IGLA), 219–239 (WLAI…GFFI), and 251–271 (IILA…GIAY). The region spanning 88–266 (TLASLGRVAQ…YIGAVGLLLD (179 aa)) is the ABC transmembrane type-1 domain.

This sequence belongs to the binding-protein-dependent transport system permease family. In terms of assembly, the complex is composed of two ATP-binding proteins (CmpC and CmpD), a transmembrane protein (CmpB) and a solute-binding protein (CmpA).

The protein resides in the cell inner membrane. Its function is as follows. Part of the ABC transporter complex CmpABCD involved in bicarbonate transport. Probably responsible for the translocation of the substrate across the membrane. The polypeptide is Bicarbonate transport system permease protein CmpB (cmpB) (Synechocystis sp. (strain ATCC 27184 / PCC 6803 / Kazusa)).